A 114-amino-acid chain; its full sequence is Iron-sulfur cluster insertion protein ErpA (114 aa).

The iron-sulfur cluster site is built by Cys-42, Cys-106, and Cys-108.

Belongs to the HesB/IscA family. In terms of assembly, homodimer. Iron-sulfur cluster is required as a cofactor.

In terms of biological role, required for insertion of 4Fe-4S clusters for at least IspG. The sequence is that of Iron-sulfur cluster insertion protein ErpA from Hamiltonella defensa subsp. Acyrthosiphon pisum (strain 5AT).